The following is a 72-amino-acid chain: Translation initiation factor IF-1 (72 aa).

Positions 1–72 constitute an S1-like domain; the sequence is MAKEKDTIRT…PTRGRIVYRK (72 aa).

It belongs to the IF-1 family. Component of the 30S ribosomal translation pre-initiation complex which assembles on the 30S ribosome in the order IF-2 and IF-3, IF-1 and N-formylmethionyl-tRNA(fMet); mRNA recruitment can occur at any time during PIC assembly.

It is found in the cytoplasm. Functionally, one of the essential components for the initiation of protein synthesis. Stabilizes the binding of IF-2 and IF-3 on the 30S subunit to which N-formylmethionyl-tRNA(fMet) subsequently binds. Helps modulate mRNA selection, yielding the 30S pre-initiation complex (PIC). Upon addition of the 50S ribosomal subunit IF-1, IF-2 and IF-3 are released leaving the mature 70S translation initiation complex. The protein is Translation initiation factor IF-1 of Thermus thermophilus (strain ATCC BAA-163 / DSM 7039 / HB27).